Reading from the N-terminus, the 142-residue chain is Group IIE secretory phospholipase A2 (142 aa).

The first 19 residues, 1-19 (MKSPHVLVFLCLLVALVTG), serve as a signal peptide directing secretion. Ca(2+) contacts are provided by Asp-41, Gly-43, Tyr-45, Gly-47, and Gly-49. Disulfide bonds link Cys-44/Cys-135, Cys-46/Cys-62, Cys-61/Cys-115, Cys-67/Cys-142, Cys-68/Cys-108, Cys-77/Cys-101, and Cys-95/Cys-106. Residue His-65 is part of the active site. Asp-66 is a Ca(2+) binding site. Asp-109 is a catalytic residue. Positions 130 and 132 each coordinate Ca(2+).

It belongs to the phospholipase A2 family. Ca(2+) serves as cofactor. As to expression, restricted to the brain, heart, lung, and placenta.

It localises to the secreted. The protein resides in the cytoplasm. It catalyses the reaction a 1,2-diacyl-sn-glycero-3-phosphoethanolamine + H2O = a 1-acyl-sn-glycero-3-phosphoethanolamine + a fatty acid + H(+). The enzyme catalyses 1-hexadecanoyl-2-(9Z-octadecenoyl)-sn-glycero-3-phosphoethanolamine + H2O = 1-hexadecanoyl-sn-glycero-3-phosphoethanolamine + (9Z)-octadecenoate + H(+). The catalysed reaction is 1-hexadecanoyl-2-(9Z,12Z-octadecadienoyl)-sn-glycero-3-phosphoethanolamine + H2O = 1-hexadecanoyl-sn-glycero-3-phosphoethanolamine + (9Z,12Z)-octadecadienoate + H(+). It carries out the reaction 1-hexadecanoyl-2-(5Z,8Z,11Z,14Z-eicosatetraenoyl)-sn-glycero-3-phosphoethanolamine + H2O = 1-hexadecanoyl-sn-glycero-3-phosphoethanolamine + (5Z,8Z,11Z,14Z)-eicosatetraenoate + H(+). It catalyses the reaction 1,2-dihexadecanoyl-sn-glycero-3-phospho-(1'-sn-glycerol) + H2O = 1-hexadecanoyl-sn-glycero-3-phospho-(1'-sn-glycerol) + hexadecanoate + H(+). The enzyme catalyses 1-hexadecanoyl-2-(9Z-octadecenoyl)-sn-glycero-3-phosphoglycerol + H2O = 1-hexadecanoyl-sn-glycero-3-phosphoglycerol + (9Z)-octadecenoate + H(+). The catalysed reaction is a 1,2-diacyl-sn-glycero-3-phosphocholine + H2O = a 1-acyl-sn-glycero-3-phosphocholine + a fatty acid + H(+). It carries out the reaction 1,2-dihexadecanoyl-sn-glycero-3-phosphocholine + H2O = 1-hexadecanoyl-sn-glycero-3-phosphocholine + hexadecanoate + H(+). It catalyses the reaction 1-hexadecanoyl-2-(9Z-octadecenoyl)-sn-glycero-3-phosphocholine + H2O = 1-hexadecanoyl-sn-glycero-3-phosphocholine + (9Z)-octadecenoate + H(+). The enzyme catalyses 1-hexadecanoyl-2-(9Z,12Z-octadecadienoyl)-sn-glycero-3-phosphocholine + H2O = (9Z,12Z)-octadecadienoate + 1-hexadecanoyl-sn-glycero-3-phosphocholine + H(+). The catalysed reaction is 1-hexadecanoyl-2-(4Z,7Z,10Z,13Z,16Z,19Z-docosahexaenoyl)-sn-glycero-3-phosphocholine + H2O = (4Z,7Z,10Z,13Z,16Z,19Z)-docosahexaenoate + 1-hexadecanoyl-sn-glycero-3-phosphocholine + H(+). In terms of biological role, secretory calcium-dependent phospholipase A2 that primarily targets extracellular phospholipids. Hydrolyzes the ester bond of the fatty acyl group attached at sn-2 position of phospholipids (phospholipase A2 activity), releasing various unsaturated fatty acids including oleoate, linoleoate, arachidonate, docosahexaenoate and lysophosphatidylethanolamines in preference to lysophosphatidylcholines. In response to high-fat diet, hydrolyzes minor lipoprotein phospholipids including phosphatidylserines, phosphatidylinositols and phosphatidylglycerols, altering lipoprotein composition and fat storage in adipose tissue and liver. May act in an autocrine and paracrine manner. Contributes to lipid remodeling of cellular membranes and generation of lipid mediators involved in pathogen clearance. Cleaves sn-2 fatty acyl chains of phosphatidylglycerols and phosphatidylethanolamines, which are major components of membrane phospholipids in bacteria. Acts as a hair follicle phospholipase A2. Selectively releases lysophosphatidylethanolamines (LPE) and various unsaturated fatty acids in skin to regulate hair follicle homeostasis. May regulate the inflammatory response by releasing arachidonate, a precursor of prostaglandins and leukotrienes. Upon allergen exposure, may participate in allergic inflammatory response by enhancing leukotriene C4 synthesis and degranulation in mast cells. The protein is Group IIE secretory phospholipase A2 (PLA2G2E) of Homo sapiens (Human).